Reading from the N-terminus, the 79-residue chain is Conotoxin Vi6.4 (79 aa).

The N-terminal stretch at 1-22 (MKLTCVLIITVLFLTASQLITA) is a signal peptide. The propeptide occupies 23-47 (DYSGDKRQYRAVRLRDEMRNFKGAR). 3 disulfide bridges follow: C49-C62, C56-C67, and C61-C77. 4-hydroxyproline is present on residues P60 and P63.

This sequence belongs to the conotoxin O1 superfamily. As to expression, expressed by the venom duct.

The protein resides in the secreted. Ion channel inhibitor that inhibits the increase in intracellular calcium upon depolarization in DRG neurons. In vivo, both intraperitoneal and intracranial injections into mice induce hyperactivity. This is Conotoxin Vi6.4 from Conus virgo (Virgin cone).